We begin with the raw amino-acid sequence, 249 residues long: MILFPAIDLKDGQCVRLKLGDMNQATVYNPDPGAQAKAFEDQGFEWLHVVDLNGAFAGETVNGAAVDAILKATKNPVQLGGGIRTLDHIENWLARGLTRVILGTVAVRDPALVIEACKRFPGHVAVGIDAKGGKVAVEGWAEASELGIIELAKKFEGAGVAAIIYTDIDRDGILTGINWASTLELADAVSIPVIASGGLASMDDIRRMVEPDARKLEGAISGRALYDGRIDPQEALALIKAAKAKEIAQ.

Catalysis depends on D8, which acts as the Proton acceptor. Residue D129 is the Proton donor of the active site.

Belongs to the HisA/HisF family.

The protein localises to the cytoplasm. The catalysed reaction is 1-(5-phospho-beta-D-ribosyl)-5-[(5-phospho-beta-D-ribosylamino)methylideneamino]imidazole-4-carboxamide = 5-[(5-phospho-1-deoxy-D-ribulos-1-ylimino)methylamino]-1-(5-phospho-beta-D-ribosyl)imidazole-4-carboxamide. Its pathway is amino-acid biosynthesis; L-histidine biosynthesis; L-histidine from 5-phospho-alpha-D-ribose 1-diphosphate: step 4/9. This chain is 1-(5-phosphoribosyl)-5-[(5-phosphoribosylamino)methylideneamino] imidazole-4-carboxamide isomerase, found in Rhizobium rhizogenes (strain K84 / ATCC BAA-868) (Agrobacterium radiobacter).